The sequence spans 513 residues: Histidine ammonia-lyase (513 aa).

A cross-link (5-imidazolinone (Ala-Gly)) is located at residues 145–147 (ASG). Residue Ser-146 is modified to 2,3-didehydroalanine (Ser).

Belongs to the PAL/histidase family. Post-translationally, contains an active site 4-methylidene-imidazol-5-one (MIO), which is formed autocatalytically by cyclization and dehydration of residues Ala-Ser-Gly.

The protein localises to the cytoplasm. It catalyses the reaction L-histidine = trans-urocanate + NH4(+). It functions in the pathway amino-acid degradation; L-histidine degradation into L-glutamate; N-formimidoyl-L-glutamate from L-histidine: step 1/3. The sequence is that of Histidine ammonia-lyase from Vibrio vulnificus (strain CMCP6).